The following is a 271-amino-acid chain: MPELPEVEVISNFLLDKIKNKQISNVIVNNWNLRAPITKNIDDMLKGKVIRNIKRRGKYTIWNTDGSMAVIIHLGMSGKLIYAEHDQAQNKHDHVVFLFSDNTSIIFNDPRRFGLVIVLNKEQEINFFDDFGIEPLTDEFSGDYLQELLKNKKANIKSALMDNKLIVGVGNIYASESLFRARISPLRPAKNLTYREYEKLAAEIKNTLSDAIAAGGSTLKDYAQPSGSAGYFQNNFYVYGKVQKPCKICNNIITLIRQNGRSTYFCNACQN.

Pro-2 (schiff-base intermediate with DNA) is an active-site residue. Residue Glu-3 is the Proton donor of the active site. Catalysis depends on Lys-58, which acts as the Proton donor; for beta-elimination activity. The DNA site is built by His-92, Arg-111, and Lys-152. The FPG-type zinc-finger motif lies at 237 to 271; sequence YVYGKVQKPCKICNNIITLIRQNGRSTYFCNACQN. The active-site Proton donor; for delta-elimination activity is the Arg-261.

This sequence belongs to the FPG family. As to quaternary structure, monomer. The cofactor is Zn(2+).

The enzyme catalyses Hydrolysis of DNA containing ring-opened 7-methylguanine residues, releasing 2,6-diamino-4-hydroxy-5-(N-methyl)formamidopyrimidine.. The catalysed reaction is 2'-deoxyribonucleotide-(2'-deoxyribose 5'-phosphate)-2'-deoxyribonucleotide-DNA = a 3'-end 2'-deoxyribonucleotide-(2,3-dehydro-2,3-deoxyribose 5'-phosphate)-DNA + a 5'-end 5'-phospho-2'-deoxyribonucleoside-DNA + H(+). Involved in base excision repair of DNA damaged by oxidation or by mutagenic agents. Acts as a DNA glycosylase that recognizes and removes damaged bases. Has a preference for oxidized purines, such as 7,8-dihydro-8-oxoguanine (8-oxoG). Has AP (apurinic/apyrimidinic) lyase activity and introduces nicks in the DNA strand. Cleaves the DNA backbone by beta-delta elimination to generate a single-strand break at the site of the removed base with both 3'- and 5'-phosphates. The polypeptide is Formamidopyrimidine-DNA glycosylase (Wolbachia sp. subsp. Drosophila simulans (strain wRi)).